The chain runs to 114 residues: Large ribosomal subunit protein uL22c (114 aa).

The protein belongs to the universal ribosomal protein uL22 family. As to quaternary structure, part of the 50S ribosomal subunit.

The protein resides in the plastid. Its subcellular location is the chloroplast. Its function is as follows. This protein binds specifically to 23S rRNA. In terms of biological role, the globular domain of the protein is located near the polypeptide exit tunnel on the outside of the subunit, while an extended beta-hairpin is found that lines the wall of the exit tunnel in the center of the 70S ribosome. In Gracilaria tenuistipitata (Red alga), this protein is Large ribosomal subunit protein uL22c (rpl22).